A 213-amino-acid polypeptide reads, in one-letter code: Phosphoribosyl-dephospho-CoA transferase (213 aa).

Active-site residues include Asp135 and Asp137.

The protein belongs to the MdcG family.

The catalysed reaction is apo-[malonate decarboxylase ACP] + 2'-(5''-triphospho-alpha-D-ribosyl)-3'-dephospho-CoA = holo-[malonate decarboxylase ACP] + diphosphate. Its function is as follows. Transfers 2'-(5-triphosphoribosyl)-3'-dephosphocoenzyme-A to the apo-[acyl-carrier-protein] of the malonate decarboxylase to yield holo-[acyl-carrier-protein]. In Xanthomonas euvesicatoria pv. vesicatoria (strain 85-10) (Xanthomonas campestris pv. vesicatoria), this protein is Phosphoribosyl-dephospho-CoA transferase.